We begin with the raw amino-acid sequence, 551 residues long: mRNA cap guanine-N(7) methyltransferase (551 aa).

Polar residues predominate over residues 1–10 (MENRSSSGTP). The interval 1–152 (MENRSSSGTP…DRETLRRRQE (152 aa)) is disordered. Composition is skewed to basic and acidic residues over residues 48 to 76 (VTEEGEASEKSEPPADRPMSKRKRMEERH) and 141 to 152 (LVDRETLRRRQE). The mRNA cap 0 methyltransferase domain maps to 194-551 (SKIKGLRSFN…FYHAFCFYKV (358 aa)). Residue 203-204 (NN) participates in mRNA binding. S-adenosyl-L-methionine is bound by residues Lys207, Gly250, Asp274, Asp312, 355–357 (MFA), and Tyr360. The tract at residues 407 to 430 (KAREEQEKKEKSDEAPEDGEVEED) is disordered. Positions 408–420 (AREEQEKKEKSDE) are enriched in basic and acidic residues. The span at 421-430 (APEDGEVEED) shows a compositional bias: acidic residues.

It belongs to the class I-like SAM-binding methyltransferase superfamily. mRNA cap 0 methyltransferase family.

It is found in the nucleus. The catalysed reaction is a 5'-end (5'-triphosphoguanosine)-ribonucleoside in mRNA + S-adenosyl-L-methionine = a 5'-end (N(7)-methyl 5'-triphosphoguanosine)-ribonucleoside in mRNA + S-adenosyl-L-homocysteine. In terms of biological role, responsible for methylating the 5'-cap structure of mRNAs. The chain is mRNA cap guanine-N(7) methyltransferase (abd1) from Aspergillus clavatus (strain ATCC 1007 / CBS 513.65 / DSM 816 / NCTC 3887 / NRRL 1 / QM 1276 / 107).